Reading from the N-terminus, the 58-residue chain is Small ribosomal subunit protein bS21 (58 aa).

The segment at 34–58 is disordered; that stretch reads KREHYESPSVRRKKKSEAARRRKRR. Basic residues predominate over residues 43–58; the sequence is VRRKKKSEAARRRKRR.

This sequence belongs to the bacterial ribosomal protein bS21 family.

The protein is Small ribosomal subunit protein bS21 of Caldicellulosiruptor bescii (strain ATCC BAA-1888 / DSM 6725 / KCTC 15123 / Z-1320) (Anaerocellum thermophilum).